The sequence spans 353 residues: Protein pelota homolog (353 aa).

The protein belongs to the eukaryotic release factor 1 family. Pelota subfamily. As to quaternary structure, monomer. A divalent metal cation serves as cofactor.

The protein resides in the cytoplasm. In terms of biological role, may function in recognizing stalled ribosomes, interact with stem-loop structures in stalled mRNA molecules, and effect endonucleolytic cleavage of the mRNA. May play a role in the release non-functional ribosomes and degradation of damaged mRNAs. Has endoribonuclease activity. In Methanobrevibacter smithii (strain ATCC 35061 / DSM 861 / OCM 144 / PS), this protein is Protein pelota homolog.